A 366-amino-acid polypeptide reads, in one-letter code: E3 ubiquitin-protein ligase SINA-like 1 (366 aa).

Positions M1–G37 are disordered. The RING-type; degenerate zinc finger occupies C56–S92. Residues V106 to L354 are SBD. The SIAH-type; degenerate zinc-finger motif lies at A109 to K232. Residues C114, C186, H198, C202, C209, C214, H226, and H231 each coordinate Zn(2+).

This sequence belongs to the SINA (Seven in absentia) family.

The enzyme catalyses S-ubiquitinyl-[E2 ubiquitin-conjugating enzyme]-L-cysteine + [acceptor protein]-L-lysine = [E2 ubiquitin-conjugating enzyme]-L-cysteine + N(6)-ubiquitinyl-[acceptor protein]-L-lysine.. It participates in protein modification; protein ubiquitination. Functionally, E3 ubiquitin-protein ligase that mediates ubiquitination and subsequent proteasomal degradation of target proteins. E3 ubiquitin ligases accept ubiquitin from an E2 ubiquitin-conjugating enzyme in the form of a thioester and then directly transfers the ubiquitin to targeted substrates. It probably triggers the ubiquitin-mediated degradation of different substrates. This Arabidopsis thaliana (Mouse-ear cress) protein is E3 ubiquitin-protein ligase SINA-like 1.